A 1075-amino-acid polypeptide reads, in one-letter code: Flocculation protein FLO5 (1075 aa).

Positions 1–24 (MTIAHHCIFLVILAFLALINVASG) are cleaved as a signal peptide. The region spanning 74–249 (GGQTDISIDY…GTTVSDNFEG (176 aa)) is the PA14 domain. Residues Asn-135, Asn-187, Asn-203, and Asn-262 are each glycosylated (N-linked (GlcNAc...) asparagine). The sugar recognition stretch occupies residues 197–240 (DGSLPDNITGTVYMYAGYYYPLKVVYSNAVSWGTLPISVELPDG). 8 repeat units span residues 278-322 (TTTE…STIT), 323-367 (TTTE…GLIT), 368-412 (TTTE…GLIT), 413-457 (TTTE…GLIT), 458-502 (TTTE…GLIS), 503-547 (TTTE…GLIT), 548-592 (TTTE…GLIT), and 593-637 (RTTE…ISSS). An 8 X 45 AA approximate tandem repeats, Thr-rich region spans residues 278–637 (TTTEPWTGTF…RTPTTAISSS (360 aa)). 4 stretches are compositionally biased toward low complexity: residues 322–345 (TTTT…VTGT), 367–390 (TTTT…VTGT), 457–480 (TTTT…VTGT), and 547–570 (TTTT…VTGT). Disordered stretches follow at residues 322–349 (TTTT…NGQP), 366–394 (ITTT…NGQP), 456–484 (ITTT…NGQP), and 546–574 (ITTT…NGQP). A glycan (N-linked (GlcNAc...) asparagine) is linked at Asn-663. 2 repeat units span residues 667-686 (VISS…TSSS) and 687-706 (FISS…IFSE). A 2 X 20 AA approximate tandem repeats, Ser-rich region spans residues 667–706 (VISSSVISSSVTSSLVTSSSFISSSVISSSTTTSTSIFSE). Residues 702–762 (SIFSESSTSS…SLPPVTSATT (61 aa)) are compositionally biased toward low complexity. The interval 702-781 (SIFSESSTSS…PATTTKTSEQ (80 aa)) is disordered. Asn-749 is a glycosylation site (N-linked (GlcNAc...) asparagine). Residues 763 to 781 (GQETASSLPPATTTKTSEQ) are compositionally biased toward polar residues. 3 consecutive repeat copies span residues 775–825 (TTKT…CPIS), 847–897 (TTET…CPIS), and 898–948 (TTES…RPQT). Positions 775–948 (TTKTSEQTTL…TVYPTWRPQT (174 aa)) are 3 X 51 AA approximate repeats, Ser/Thr-rich. The span at 948 to 958 (TTNEQSVSSKM) shows a compositional bias: polar residues. Disordered stretches follow at residues 948-980 (TTNE…AVTS) and 1016-1038 (SLTS…SSMV). Composition is skewed to low complexity over residues 959–977 (NSAT…TKTA) and 1016–1026 (SLTSSGLSTMS). The segment covering 1027 to 1038 (QQPRSTPASSMV) has biased composition (polar residues). Gly-1052 carries the GPI-anchor amidated glycine lipid modification. A propeptide spans 1053 to 1075 (SANSLLAGSGLSVFIASLLLAII) (removed in mature form).

Belongs to the flocculin family. Post-translationally, extensively O-glycosylated. In terms of processing, the GPI-anchor is attached to the protein in the endoplasmic reticulum and serves to target the protein to the cell surface. There, the glucosamine-inositol phospholipid moiety is cleaved off and the GPI-modified mannoprotein is covalently attached via its lipidless GPI glycan remnant to the 1,6-beta-glucan of the outer cell wall layer.

It is found in the secreted. The protein resides in the cell wall. The protein localises to the membrane. Its function is as follows. Cell wall protein that participates directly in adhesive cell-cell interactions during yeast flocculation, a reversible, asexual and Ca(2+)-dependent process in which cells adhere to form aggregates (flocs) consisting of thousands of cells. The lectin-like protein sticks out of the cell wall of flocculent cells and selectively binds mannose residues in the cell walls of adjacent cells. Activity is inhibited by mannose, but not by glucose, maltose, sucrose or galactose. The protein is Flocculation protein FLO5 (FLO5) of Saccharomyces cerevisiae (strain ATCC 204508 / S288c) (Baker's yeast).